We begin with the raw amino-acid sequence, 392 residues long: Putative nicotinate phosphoribosyltransferase (392 aa).

Nicotinate contacts are provided by Y21, F138, and T179. H182 bears the Phosphohistidine mark. A nicotinate-binding site is contributed by R235. 5-phospho-alpha-D-ribose 1-diphosphate-binding residues include S240, G272, and T293. The Zn(2+) site is built by C330, C333, C348, and C350.

Belongs to the NAPRTase family. Highly divergent. Homodimer. Forms a trimer of dimers in the crystal. Post-translationally, transiently phosphorylated on a His residue during the reaction cycle. Phosphorylation strongly increases the affinity for substrates and increases the rate of nicotinate D-ribonucleotide production. Dephosphorylation regenerates the low-affinity form of the enzyme, leading to product release.

The enzyme catalyses nicotinate + 5-phospho-alpha-D-ribose 1-diphosphate + ATP + H2O = nicotinate beta-D-ribonucleotide + ADP + phosphate + diphosphate. Its pathway is cofactor biosynthesis; NAD(+) biosynthesis; nicotinate D-ribonucleotide from nicotinate: step 1/1. In terms of biological role, catalyzes the synthesis of beta-nicotinate D-ribonucleotide from nicotinate and 5-phospho-D-ribose 1-phosphate at the expense of ATP. The protein is Putative nicotinate phosphoribosyltransferase of Thermoplasma acidophilum (strain ATCC 25905 / DSM 1728 / JCM 9062 / NBRC 15155 / AMRC-C165).